We begin with the raw amino-acid sequence, 179 residues long: Large ribosomal subunit protein uL6 (179 aa).

This sequence belongs to the universal ribosomal protein uL6 family. In terms of assembly, part of the 50S ribosomal subunit.

In terms of biological role, this protein binds to the 23S rRNA, and is important in its secondary structure. It is located near the subunit interface in the base of the L7/L12 stalk, and near the tRNA binding site of the peptidyltransferase center. This chain is Large ribosomal subunit protein uL6, found in Kineococcus radiotolerans (strain ATCC BAA-149 / DSM 14245 / SRS30216).